We begin with the raw amino-acid sequence, 364 residues long: GMP reductase (364 aa).

NADP(+)-binding positions include 26–27, Lys78, 132–134, and 183–184; these read SR, DVA, and IG. K(+)-binding residues include Gly184, Gly186, and Cys189. Cys189 functions as the Thioimidate intermediate in the catalytic mechanism. Catalysis depends on Thr191, which acts as the Proton donor/acceptor. Arg192 is a K(+) binding site. GMP contacts are provided by residues 222-224, 245-246, 271-273, and 289-293; these read DGG, GG, GMS, and RASEG. NADP(+)-binding positions include Met272, 288 to 289, and 317 to 320; these read YR and SACT.

Belongs to the IMPDH/GMPR family. GuaC type 1 subfamily. Homotetramer.

The enzyme catalyses IMP + NH4(+) + NADP(+) = GMP + NADPH + 2 H(+). In terms of biological role, catalyzes the irreversible NADPH-dependent deamination of GMP to IMP. It functions in the conversion of nucleobase, nucleoside and nucleotide derivatives of G to A nucleotides, and in maintaining the intracellular balance of A and G nucleotides. In Onchocerca volvulus, this protein is GMP reductase (gmr-1).